A 178-amino-acid chain; its full sequence is Cell division protein SepF (178 aa).

Over residues 21–46 the composition is skewed to basic and acidic residues; the sequence is YESEQSVATHHDEERPQAQEREERRA. The segment at 21–65 is disordered; that stretch reads YESEQSVATHHDEERPQAQEREERRAPAPVREVVREMPTVDAEEE.

The protein belongs to the SepF family. As to quaternary structure, homodimer. Interacts with FtsZ.

It is found in the cytoplasm. In terms of biological role, cell division protein that is part of the divisome complex and is recruited early to the Z-ring. Probably stimulates Z-ring formation, perhaps through the cross-linking of FtsZ protofilaments. Its function overlaps with FtsA. This Paenarthrobacter aurescens (strain TC1) protein is Cell division protein SepF.